Reading from the N-terminus, the 621-residue chain is Chaperone protein HtpG (621 aa).

The a; substrate-binding stretch occupies residues 1-328 (MTQEKKKFDA…SEDLPLNISR (328 aa)). Positions 329 to 544 (ESLQHNSVLE…DSAMDIRMER (216 aa)) are b. Residues 475–495 (SDIDVEQTTSQSEDKNTHSKK) form a disordered region. The segment covering 486-495 (SEDKNTHSKK) has biased composition (basic and acidic residues). The interval 545-621 (FLIEQKQITA…LNDIVQKAIL (77 aa)) is c.

It belongs to the heat shock protein 90 family. In terms of assembly, homodimer.

The protein resides in the cytoplasm. Its function is as follows. Molecular chaperone. Has ATPase activity. The polypeptide is Chaperone protein HtpG (Rickettsia akari (strain Hartford)).